The chain runs to 271 residues: Calcium-binding protein 4 (271 aa).

The tract at residues 1-105 (MATEHNVQLV…RSDPQQDAAQ (105 aa)) is disordered. A Phosphoserine; by PKC/PRKCZ modification is found at Ser-37. A compositionally biased stretch (low complexity) spans 45-67 (GSQKASSGDQSSSQGSEASGSSK). Residues 87–96 (ASHRHSHRHR) are compositionally biased toward basic residues. 4 EF-hand domains span residues 125–160 (EELEELQAAFEEFDTDQDGYIGYRELGDCMRTLGYM), 179–196 (GFVDFEEFVELISPKLRE), 202–237 (LGVRELRIAFREFDKDRDGRITVAELRQAAPALLGE), and 239–271 (LEGTELDEMLREMDLNGDGTIDFDEFVMMLSTG). Residues Asp-138, Asp-140, Asp-142, Tyr-144, and Glu-149 each coordinate Ca(2+). Asp-215, Asp-217, Asp-219, Arg-221, Glu-226, Asp-252, Asn-254, Asp-256, Thr-258, and Glu-263 together coordinate Ca(2+).

Interacts with CACNA1F and CACNA1D (via IQ domain) in a calcium independent manner. Interacts (via N-terminus) with UNC119. Phosphorylated. Phosphorylation levels change with the light conditions and regulate the activity, but has no effect on calcium binding. Expressed in retina and in the inner hair cells (IHC) of the cochlea.

Its subcellular location is the cytoplasm. It is found in the presynapse. In terms of biological role, involved in normal synaptic function through regulation of Ca(2+) influx and neurotransmitter release in photoreceptor synaptic terminals and in auditory transmission. Modulator of CACNA1D and CACNA1F, suppressing the calcium-dependent inactivation and shifting the activation range to more hyperpolarized voltages. This is Calcium-binding protein 4 (Cabp4) from Mus musculus (Mouse).